The primary structure comprises 400 residues: Cytochrome b (400 aa).

Transmembrane regions (helical) follow at residues 32 to 52 (FGSL…TLAM), 76 to 98 (WLIR…LHIG), 113 to 133 (TWSI…LGYV), and 179 to 199 (FFSL…MHLI). His-82 and His-96 together coordinate heme b. 2 residues coordinate heme b: His-183 and His-197. His-202 provides a ligand contact to a ubiquinone. 4 consecutive transmembrane segments (helical) span residues 226-246 (YLFK…IFVF), 290-310 (AVGV…PYLD), 322-342 (LSKV…QLGA), and 349-369 (FIVF…IIIP).

It belongs to the cytochrome b family. Fungal cytochrome b-c1 complex contains 10 subunits; 3 respiratory subunits, 2 core proteins and 5 low-molecular weight proteins. Cytochrome b-c1 complex is a homodimer. Requires heme b as cofactor.

Its subcellular location is the mitochondrion inner membrane. Component of the ubiquinol-cytochrome c reductase complex (complex III or cytochrome b-c1 complex) that is part of the mitochondrial respiratory chain. The b-c1 complex mediates electron transfer from ubiquinol to cytochrome c. Contributes to the generation of a proton gradient across the mitochondrial membrane that is then used for ATP synthesis. This is Cytochrome b (cob) from Epidermophyton floccosum.